The primary structure comprises 505 residues: ATP synthase subunit alpha (505 aa).

172–179 (GDRQIGKT) is an ATP binding site.

The protein belongs to the ATPase alpha/beta chains family. As to quaternary structure, F-type ATPases have 2 components, CF(1) - the catalytic core - and CF(0) - the membrane proton channel. CF(1) has five subunits: alpha(3), beta(3), gamma(1), delta(1), epsilon(1). CF(0) has three main subunits: a(1), b(2) and c(9-12). The alpha and beta chains form an alternating ring which encloses part of the gamma chain. CF(1) is attached to CF(0) by a central stalk formed by the gamma and epsilon chains, while a peripheral stalk is formed by the delta and b chains.

It localises to the cell inner membrane. The enzyme catalyses ATP + H2O + 4 H(+)(in) = ADP + phosphate + 5 H(+)(out). Produces ATP from ADP in the presence of a proton gradient across the membrane. The alpha chain is a regulatory subunit. The protein is ATP synthase subunit alpha of Syntrophobacter fumaroxidans (strain DSM 10017 / MPOB).